Reading from the N-terminus, the 28-residue chain is Potassium channel toxin alpha-KTx 9.10 (28 aa).

3 disulfides stabilise this stretch: Cys-3/Cys-19, Cys-6/Cys-24, and Cys-10/Cys-26.

Belongs to the short scorpion toxin superfamily. Potassium channel inhibitor family. Alpha-KTx 09 subfamily. Expressed by the venom gland.

It is found in the secreted. In terms of biological role, blocks Shaker potassium channels. The chain is Potassium channel toxin alpha-KTx 9.10 from Mesobuthus eupeus (Lesser Asian scorpion).